A 544-amino-acid polypeptide reads, in one-letter code: Chaperonin GroEL 1 (544 aa).

ATP-binding positions include Thr-29 to Pro-32, Asp-86 to Thr-90, Gly-413, Asn-479 to Ala-481, and Asp-495.

Belongs to the chaperonin (HSP60) family. In terms of assembly, forms a cylinder of 14 subunits composed of two heptameric rings stacked back-to-back. Interacts with the co-chaperonin GroES.

It is found in the cytoplasm. The catalysed reaction is ATP + H2O + a folded polypeptide = ADP + phosphate + an unfolded polypeptide.. In terms of biological role, together with its co-chaperonin GroES, plays an essential role in assisting protein folding. The GroEL-GroES system forms a nano-cage that allows encapsulation of the non-native substrate proteins and provides a physical environment optimized to promote and accelerate protein folding. The sequence is that of Chaperonin GroEL 1 from Parasynechococcus marenigrum (strain WH8102).